We begin with the raw amino-acid sequence, 538 residues long: Bifunctional purine biosynthesis protein PurH (538 aa).

The MGS-like domain occupies 6–158 (KHIPAPDLHR…KNHAYVATVV (153 aa)).

This sequence belongs to the PurH family.

The catalysed reaction is (6R)-10-formyltetrahydrofolate + 5-amino-1-(5-phospho-beta-D-ribosyl)imidazole-4-carboxamide = 5-formamido-1-(5-phospho-D-ribosyl)imidazole-4-carboxamide + (6S)-5,6,7,8-tetrahydrofolate. The enzyme catalyses IMP + H2O = 5-formamido-1-(5-phospho-D-ribosyl)imidazole-4-carboxamide. The protein operates within purine metabolism; IMP biosynthesis via de novo pathway; 5-formamido-1-(5-phospho-D-ribosyl)imidazole-4-carboxamide from 5-amino-1-(5-phospho-D-ribosyl)imidazole-4-carboxamide (10-formyl THF route): step 1/1. It functions in the pathway purine metabolism; IMP biosynthesis via de novo pathway; IMP from 5-formamido-1-(5-phospho-D-ribosyl)imidazole-4-carboxamide: step 1/1. The sequence is that of Bifunctional purine biosynthesis protein PurH from Brucella abortus (strain S19).